A 455-amino-acid polypeptide reads, in one-letter code: Phosphoglucosamine mutase (455 aa).

The active-site Phosphoserine intermediate is Ser103. Ser103, Asp243, Asp245, and Asp247 together coordinate Mg(2+). A Phosphoserine modification is found at Ser103.

Belongs to the phosphohexose mutase family. Mg(2+) is required as a cofactor. In terms of processing, activated by phosphorylation.

It catalyses the reaction alpha-D-glucosamine 1-phosphate = D-glucosamine 6-phosphate. Functionally, catalyzes the conversion of glucosamine-6-phosphate to glucosamine-1-phosphate. In Halorhodospira halophila (strain DSM 244 / SL1) (Ectothiorhodospira halophila (strain DSM 244 / SL1)), this protein is Phosphoglucosamine mutase.